The sequence spans 554 residues: Propanediol dehydratase large subunit (554 aa).

This sequence belongs to the diol/glycerol dehydratase large subunit family. In terms of assembly, the propanediol dehydratase enzyme is a heterotrimeric complex composed of a large (PduC), a medium (PduD) and a small (PduE) subunit. Adenosylcob(III)alamin serves as cofactor.

The protein resides in the bacterial microcompartment. The catalysed reaction is propane-1,2-diol = propanal + H2O. It participates in polyol metabolism; 1,2-propanediol degradation. Inhibited by glycerol. Its function is as follows. Part of the PduCDE complex that catalyzes the dehydration of 1,2-propanediol (1,2-PD) to propionaldehyde. Required for S.typhimurium growth on 1,2-PD as the sole carbon and energy source. This subunit is directly targeted to the BMC. In terms of biological role, the 1,2-PD-specific bacterial microcompartment (BMC) concentrates low levels of 1,2-PD catabolic enzymes, concentrates volatile reaction intermediates thus enhancing pathway flux and keeps the level of toxic, mutagenic propionaldehyde low. The sequence is that of Propanediol dehydratase large subunit from Salmonella typhimurium (strain LT2 / SGSC1412 / ATCC 700720).